The chain runs to 528 residues: T-complex protein 1 subunit delta (528 aa).

The protein belongs to the TCP-1 chaperonin family. Heterooligomeric complex of about 850 to 900 kDa that forms two stacked rings, 12 to 16 nm in diameter.

Its subcellular location is the cytoplasm. In terms of biological role, molecular chaperone; assists the folding of proteins upon ATP hydrolysis. Known to play a role, in vitro, in the folding of actin and tubulin. In yeast may play a role in mitotic spindle formation. The protein is T-complex protein 1 subunit delta (CCT4) of Saccharomyces cerevisiae (strain ATCC 204508 / S288c) (Baker's yeast).